A 630-amino-acid polypeptide reads, in one-letter code: Chaperone protein HtpG (630 aa).

Residues 1 to 336 form an a; substrate-binding region; the sequence is MTTTVEQTAE…TADLPLNVSR (336 aa). The tract at residues 337–551 is b; it reads EMIQESPILA…EDGYDRQMEK (215 aa). The interval 552–630 is c; the sequence is ILQNAGRLQG…VFERSVRSEG (79 aa).

The protein belongs to the heat shock protein 90 family. As to quaternary structure, homodimer.

The protein resides in the cytoplasm. Functionally, molecular chaperone. Has ATPase activity. This Rhizobium etli (strain ATCC 51251 / DSM 11541 / JCM 21823 / NBRC 15573 / CFN 42) protein is Chaperone protein HtpG.